The chain runs to 453 residues: Cysteine--tRNA ligase (453 aa).

Cys-30 contributes to the Zn(2+) binding site. Positions 32–42 (PTVYDRAHLGN) match the 'HIGH' region motif. Zn(2+) contacts are provided by Cys-212, His-237, and Glu-241. The 'KMSKS' region motif lies at 268 to 272 (KMSKS). Lys-271 contacts ATP.

It belongs to the class-I aminoacyl-tRNA synthetase family. As to quaternary structure, monomer. It depends on Zn(2+) as a cofactor.

It localises to the cytoplasm. It carries out the reaction tRNA(Cys) + L-cysteine + ATP = L-cysteinyl-tRNA(Cys) + AMP + diphosphate. This chain is Cysteine--tRNA ligase, found in Jannaschia sp. (strain CCS1).